The primary structure comprises 133 residues: Small ribosomal subunit protein uS8 (133 aa).

Residues 1-28 form a disordered region; it reads MANHDPISDMLTRIRNASEKRHEKTKVP. Residues 16–26 are compositionally biased toward basic and acidic residues; sequence NASEKRHEKTK.

Belongs to the universal ribosomal protein uS8 family. Part of the 30S ribosomal subunit. Contacts proteins S5 and S12.

Functionally, one of the primary rRNA binding proteins, it binds directly to 16S rRNA central domain where it helps coordinate assembly of the platform of the 30S subunit. The protein is Small ribosomal subunit protein uS8 of Prochlorococcus marinus (strain NATL1A).